The chain runs to 326 residues: Aldo-keto reductase family 1 member D1 (326 aa).

NADP(+) is bound by residues 22–26 (GLGTY) and D53. Y26 contributes to the substrate binding site. The substrate site is built by Y58, W89, E120, and Y132. The active-site Proton donor is the Y58. Residues 169-170 (SN), Q193, and 219-224 (YSPLGT) contribute to the NADP(+) site. W230 is a substrate binding site. 273–283 (KSFNPERIKEN) is a binding site for NADP(+).

Belongs to the aldo/keto reductase family.

It localises to the cytoplasm. The catalysed reaction is 5beta-cholestan-3-one + NADP(+) = cholest-4-en-3-one + NADPH + H(+). It carries out the reaction 4,5beta-dihydrocortisone + NADP(+) = cortisone + NADPH + H(+). The enzyme catalyses cortisol + NADPH + H(+) = 5beta-dihydrocortisol + NADP(+). It catalyses the reaction corticosterone + NADPH + H(+) = 5beta-dihydrocorticosterone + NADP(+). The catalysed reaction is 7alpha,12alpha-dihydroxycholest-4-en-3-one + NADPH + H(+) = 7alpha,12alpha-dihydroxy-5beta-cholestan-3-one + NADP(+). It carries out the reaction 7alpha-hydroxycholest-4-en-3-one + NADPH + H(+) = 7alpha-hydroxy-5beta-cholestan-3-one + NADP(+). The enzyme catalyses epitestosterone + NADPH + H(+) = 5beta-dihydroepitestosterone + NADP(+). It catalyses the reaction androst-4-ene-3,17-dione + NADPH + H(+) = 5beta-androstane-3,17-dione + NADP(+). The catalysed reaction is progesterone + NADPH + H(+) = 5beta-pregnan-3,20-dione + NADP(+). It carries out the reaction 21-hydroxyprogesterone + NADPH + H(+) = 5beta-dihydrodeoxycorticosterone + NADP(+). The enzyme catalyses aldosterone + NADPH + H(+) = 5beta-dihydroaldosterone + NADP(+). It catalyses the reaction 17beta-hydroxyandrosta-1,4-dien-3-one + NADPH + H(+) = 17beta-hydroxy-5beta-androst-1-en-3-one + NADP(+). The catalysed reaction is 17beta-hydroxyestr-4-en-3-one + NADPH + H(+) = 17beta-hydroxy-5beta-estran-3-one + NADP(+). It carries out the reaction 5beta-dihydrotestosterone + NADP(+) = testosterone + NADPH + H(+). The enzyme catalyses androst-4-ene-3,11,17-trione + NADPH + H(+) = 17beta-hydroxyandrost-4-ene-3,11-dione + NADP(+). Subject to inhibition by high substrate concentrations. Inhibited by testosterone concentrations above 10 uM. Inhibited by the primary and secondary bile acids chenodeoxycholic acid and ursodeoxycholic acid. In terms of biological role, catalyzes the stereospecific NADPH-dependent reduction of the C4-C5 double bond of bile acid intermediates and steroid hormones carrying a delta(4)-3-one structure to yield an A/B cis-ring junction. This cis-configuration is crucial for bile acid biosynthesis and plays important roles in steroid metabolism. Capable of reducing a broad range of delta-(4)-3-ketosteroids from C18 (such as, 17beta-hydroxyestr-4-en-3-one) to C27 (such as, 7alpha-hydroxycholest-4-en-3-one). The protein is Aldo-keto reductase family 1 member D1 (AKR1D1) of Oryctolagus cuniculus (Rabbit).